Reading from the N-terminus, the 413-residue chain is Na(+)/H(+) antiporter NhaA (413 aa).

Transmembrane regions (helical) follow at residues Leu-15–Val-35, Leu-57–Ile-77, Ala-93–Leu-113, Gly-123–Gly-143, Ile-152–Phe-172, Ala-175–Phe-195, Val-211–Leu-231, Trp-261–Gly-281, Val-295–Ile-315, Gly-333–Phe-353, and Val-364–Thr-384.

Belongs to the NhaA Na(+)/H(+) (TC 2.A.33) antiporter family.

It localises to the cell inner membrane. The catalysed reaction is Na(+)(in) + 2 H(+)(out) = Na(+)(out) + 2 H(+)(in). Functionally, na(+)/H(+) antiporter that extrudes sodium in exchange for external protons. In Caulobacter vibrioides (strain ATCC 19089 / CIP 103742 / CB 15) (Caulobacter crescentus), this protein is Na(+)/H(+) antiporter NhaA.